We begin with the raw amino-acid sequence, 406 residues long: Probable tRNA sulfurtransferase (406 aa).

In terms of domain architecture, THUMP spans 60–162 (PEAKARLQDT…PGAALLEVER (103 aa)). ATP is bound by residues 180 to 181 (LL), 205 to 206 (HF), Arg-262, Gly-284, and Gln-293.

Belongs to the ThiI family.

Its subcellular location is the cytoplasm. The catalysed reaction is [ThiI sulfur-carrier protein]-S-sulfanyl-L-cysteine + a uridine in tRNA + 2 reduced [2Fe-2S]-[ferredoxin] + ATP + H(+) = [ThiI sulfur-carrier protein]-L-cysteine + a 4-thiouridine in tRNA + 2 oxidized [2Fe-2S]-[ferredoxin] + AMP + diphosphate. The enzyme catalyses [ThiS sulfur-carrier protein]-C-terminal Gly-Gly-AMP + S-sulfanyl-L-cysteinyl-[cysteine desulfurase] + AH2 = [ThiS sulfur-carrier protein]-C-terminal-Gly-aminoethanethioate + L-cysteinyl-[cysteine desulfurase] + A + AMP + 2 H(+). It functions in the pathway cofactor biosynthesis; thiamine diphosphate biosynthesis. Catalyzes the ATP-dependent transfer of a sulfur to tRNA to produce 4-thiouridine in position 8 of tRNAs, which functions as a near-UV photosensor. Also catalyzes the transfer of sulfur to the sulfur carrier protein ThiS, forming ThiS-thiocarboxylate. This is a step in the synthesis of thiazole, in the thiamine biosynthesis pathway. The sulfur is donated as persulfide by IscS. This chain is Probable tRNA sulfurtransferase, found in Thermus thermophilus (strain ATCC 27634 / DSM 579 / HB8).